A 507-amino-acid polypeptide reads, in one-letter code: Lysine--tRNA ligase (507 aa).

A 'HIGH' region motif is present at residues P26–N34. Positions A270–S274 match the 'KMSKS' region motif.

The protein belongs to the class-I aminoacyl-tRNA synthetase family.

It localises to the cytoplasm. The enzyme catalyses tRNA(Lys) + L-lysine + ATP = L-lysyl-tRNA(Lys) + AMP + diphosphate. The chain is Lysine--tRNA ligase (lysS) from Thermoplasma acidophilum (strain ATCC 25905 / DSM 1728 / JCM 9062 / NBRC 15155 / AMRC-C165).